The primary structure comprises 560 residues: Phosphoglucomutase 1 (560 aa).

Residues Arg-24 and Ser-116 each coordinate alpha-D-glucose 1,6-bisphosphate. Ser-116 functions as the Phosphoserine intermediate in the catalytic mechanism. The Mg(2+) site is built by Ser-116, Asp-288, Asp-290, and Asp-292. A Phosphoserine modification is found at Ser-116. Alpha-D-glucose 1,6-bisphosphate contacts are provided by Asp-292, Arg-293, Thr-357, Glu-376, Ser-378, and Lys-389.

The protein belongs to the phosphohexose mutase family. As to quaternary structure, monomer. The cofactor is Mg(2+). In terms of tissue distribution, localized primarily to fat bodies in third instar larvae.

The catalysed reaction is alpha-D-glucose 1-phosphate = alpha-D-glucose 6-phosphate. It carries out the reaction O-phospho-L-seryl-[protein] + alpha-D-glucose 1-phosphate = alpha-D-glucose 1,6-bisphosphate + L-seryl-[protein]. The enzyme catalyses alpha-D-glucose 1,6-bisphosphate + L-seryl-[protein] = O-phospho-L-seryl-[protein] + alpha-D-glucose 6-phosphate. Catalyzes the reversible isomerization of alpha-D-glucose 1-phosphate to alpha-D-glucose 6-phosphate. The mechanism proceeds via the intermediate compound alpha-D-glucose 1,6-bisphosphate. This enzyme participates in both the breakdown and synthesis of glucose. Enzyme of the glycolytic pathway. Glycolysis is essential in glial cells but not in neurons; neurons rely on the citric acid cycle for their energy needs, and on lactate and alanine secreted into the hemolymph by glial cells to fuel it. The chain is Phosphoglucomutase 1 from Drosophila melanogaster (Fruit fly).